The following is a 605-amino-acid chain: Elongation factor 4 (605 aa).

Residues 11–193 (KNIRNFSIIA…TLVDVIPAPT (183 aa)) form the tr-type G domain. GTP is bound by residues 23 to 28 (DHGKST) and 140 to 143 (NKID).

It belongs to the TRAFAC class translation factor GTPase superfamily. Classic translation factor GTPase family. LepA subfamily.

It localises to the cell inner membrane. The enzyme catalyses GTP + H2O = GDP + phosphate + H(+). In terms of biological role, required for accurate and efficient protein synthesis under certain stress conditions. May act as a fidelity factor of the translation reaction, by catalyzing a one-codon backward translocation of tRNAs on improperly translocated ribosomes. Back-translocation proceeds from a post-translocation (POST) complex to a pre-translocation (PRE) complex, thus giving elongation factor G a second chance to translocate the tRNAs correctly. Binds to ribosomes in a GTP-dependent manner. The protein is Elongation factor 4 of Acinetobacter baumannii (strain AB307-0294).